A 476-amino-acid polypeptide reads, in one-letter code: Thyroid receptor-interacting protein 6 (476 aa).

Pro residues predominate over residues 1–12 (MSGPTWLPPKQP). Disordered regions lie at residues 1–93 (MSGP…PGSL) and 108–253 (NGGR…QPPE). Arg25 carries the post-translational modification Asymmetric dimethylarginine; alternate. An Omega-N-methylarginine; alternate modification is found at Arg25. Position 55 is a phosphotyrosine; by SRC (Tyr55). Residue Ser92 is modified to Phosphoserine. An Omega-N-methylarginine modification is found at Arg111. Ser142 is modified (phosphoserine). Positions 152–167 (PTPASYTTASTPAGPA) are enriched in low complexity. Residues Arg179 and Arg186 each carry the omega-N-methylarginine modification. Ser189 carries the phosphoserine modification. Arg205, Arg236, and Arg238 each carry omega-N-methylarginine. Ser249 carries the post-translational modification Phosphoserine. LIM zinc-binding domains are found at residues 279 to 316 (CGGCGEDVVGDGAGVVALDRVFHVGCFVCSTCRAQLRG), 339 to 398 (CATC…FAPR), and 399 to 467 (CSVC…RIQE). The interaction with MAGI1 and PTPN13 stretch occupies residues 469 to 476 (SATVTTDC).

It belongs to the zyxin/ajuba family. In terms of assembly, specifically interacts with the ligand binding domain of the thyroid receptor (TR) in the presence of thyroid hormone. Interacts (via the third LIM domain and C-terminus) with PTPN13 (via the second PDZ domain). Interacts (via the second LIM domain or via the third LIM domain plus C-terminus) with PDLIM4 (via PDZ domain). Found in a complex with PTPN13 and PDLIM4. Interacts with SVIL isoform 2. Interacts with LPAR2 but not other LPA receptors. Interacts with PRKAA2. Interacts with MAGI1. Interacts with SCRIB. In case of infection, interacts with S.typhimurium protein sseI. Phosphorylation at Tyr-55 by SRC is required for enhancement of lysophosphatidic acid-induced cell migration. Tyr-55 is dephosphorylated by PTPN13. As to expression, abundantly expressed in kidney, liver and lung. Lower levels in heart, placenta and pancreas. Expressed in colonic epithelial cells. Up-regulated in colonic tumors.

The protein localises to the cytoplasm. It localises to the cytoskeleton. Its subcellular location is the cell junction. It is found in the focal adhesion. The protein resides in the nucleus. Its function is as follows. Relays signals from the cell surface to the nucleus to weaken adherens junction and promote actin cytoskeleton reorganization and cell invasiveness. Involved in lysophosphatidic acid-induced cell adhesion and migration. Acts as a transcriptional coactivator for NF-kappa-B and JUN, and mediates the transrepression of these transcription factors induced by glucocorticoid receptor. The polypeptide is Thyroid receptor-interacting protein 6 (TRIP6) (Homo sapiens (Human)).